The sequence spans 94 residues: ATP-dependent Clp protease adapter protein ClpS (94 aa).

The protein belongs to the ClpS family. Binds to the N-terminal domain of the chaperone ClpA.

Its function is as follows. Involved in the modulation of the specificity of the ClpAP-mediated ATP-dependent protein degradation. In Thermosynechococcus vestitus (strain NIES-2133 / IAM M-273 / BP-1), this protein is ATP-dependent Clp protease adapter protein ClpS.